The primary structure comprises 398 residues: Acetate kinase 1 (398 aa).

Asn9 is a binding site for Mg(2+). Lys16 provides a ligand contact to ATP. Substrate is bound at residue Arg89. Asp146 serves as the catalytic Proton donor/acceptor. ATP-binding positions include 206-210 (HLGNG), 281-283 (DCR), and 329-333 (GIGEN). Glu384 serves as a coordination point for Mg(2+).

The protein belongs to the acetokinase family. In terms of assembly, homodimer. Mg(2+) is required as a cofactor. Mn(2+) serves as cofactor.

It is found in the cytoplasm. It catalyses the reaction acetate + ATP = acetyl phosphate + ADP. It functions in the pathway metabolic intermediate biosynthesis; acetyl-CoA biosynthesis; acetyl-CoA from acetate: step 1/2. Its function is as follows. Catalyzes the formation of acetyl phosphate from acetate and ATP. Can also catalyze the reverse reaction. This is Acetate kinase 1 from Vibrio parahaemolyticus serotype O3:K6 (strain RIMD 2210633).